The primary structure comprises 1675 residues: Clathrin heavy chain 1 (1675 aa).

N-acetylalanine is present on A2. The segment at 2-479 is globular terminal domain; it reads AQILPIRFQE…VDPTLALSVY (478 aa). WD40-like repeat regions lie at residues 24 to 67, 68 to 107, 108 to 149, 150 to 195, 196 to 257, 258 to 301, and 302 to 330; these read NIGF…RPIS, ADSA…MTDD, VTFW…SSLA, GCQI…QPIE, GHAA…PEAQ, NDFP…ISGE, and TIFV…VCVE. Position 67 is a phosphoserine (S67). Phosphothreonine is present on T105. A Phosphotyrosine modification is found at Y184. T394 bears the Phosphothreonine mark. The tract at residues 449–465 is binding site for the uncoating ATPase, involved in lattice disassembly; the sequence is EKWLKEDKLECSEELGD. A flexible linker region spans residues 480–523; the sequence is LRANVPNKVIQCFAETGQVQKIVLYAKKVGYTPDWIFLLRNVMR. The interval 524-634 is distal segment; it reads ISPDQGQQFA…RALEHFTDLY (111 aa). Positions 524–1675 are heavy chain arm; it reads ISPDQGQQFA…QPQPGFGYSM (1152 aa). CHCR repeat units lie at residues 537–683, 686–828, 833–972, 979–1124, 1128–1269, 1274–1420, and 1423–1566; these read VQDE…QICV, ASKY…SEDV, ILVV…PLID, LSET…VKEA, YIKA…FRLA, LHIV…LLLN, and LMVL…RECF. Position 634 is a phosphotyrosine (Y634). The tract at residues 639-1675 is proximal segment; sequence AVVHTHLLNP…QPQPGFGYSM (1037 aa). K737 carries the post-translational modification N6-succinyllysine. K856 carries the post-translational modification N6-acetyllysine. The residue at position 899 (Y899) is a Phosphotyrosine. S1167 is subject to Phosphoserine. Y1206 carries the phosphotyrosine modification. Positions 1213 to 1522 are involved in binding clathrin light chain; that stretch reads AAKLLYNNVS…YLFKGNNRWK (310 aa). A Phosphoserine modification is found at S1229. N6-acetyllysine; alternate is present on K1441. Residue K1441 is modified to N6-succinyllysine; alternate. Phosphotyrosine occurs at positions 1477 and 1487. Phosphoserine is present on S1494. N6-acetyllysine is present on K1501. Residues 1550–1675 form a trimerization region; the sequence is AEELLQWFLQ…QPQPGFGYSM (126 aa).

This sequence belongs to the clathrin heavy chain family. Clathrin triskelions, composed of 3 heavy chains and 3 light chains, are the basic subunits of the clathrin coat. In the presence of light chains, hub assembly is influenced by both the pH and the concentration of calcium. Interacts with HIP1. Interacts with DENND1A, DENND1B and DENND1C. Interacts with OCRL. Interacts with ERBB2. Interacts with FKBP6. Interacts with CKAP5 and TACC3 forming the TACC3/ch-TOG/clathrin complex located at spindle inter-microtubules bridges; the complex implicates clathrin triskelions; TACC3 and CLTC are proposed to form a composite microtubule interaction surface. Interacts with ATG16L1 (via N-terminus). Interacts with RFTN1; the interaction occurs in response to pathogens. Interacts with TMEM106B (via N-terminus). Interacts with DNAJC6; this interaction produces a local change in heavy-chain contacts, creating a detectable global distortion of the clathrin coat and leads to the recruitment of HSPA8.

Its subcellular location is the cytoplasmic vesicle membrane. The protein resides in the membrane. It localises to the coated pit. The protein localises to the melanosome. It is found in the cytoplasm. Its subcellular location is the cytoskeleton. The protein resides in the spindle. Its function is as follows. Clathrin is the major protein of the polyhedral coat of coated pits and vesicles. Two different adapter protein complexes link the clathrin lattice either to the plasma membrane or to the trans-Golgi network. Acts as a component of the TACC3/ch-TOG/clathrin complex proposed to contribute to stabilization of kinetochore fibers of the mitotic spindle by acting as inter-microtubule bridge. The TACC3/ch-TOG/clathrin complex is required for the maintenance of kinetochore fiber tension. Plays a role in early autophagosome formation. Interaction with DNAJC6 mediates the recruitment of HSPA8 to the clathrin lattice and creates local destabilization of the lattice promoting uncoating. The protein is Clathrin heavy chain 1 of Bos taurus (Bovine).